The primary structure comprises 185 residues: Probable nicotinate-nucleotide adenylyltransferase (185 aa).

Belongs to the NadD family.

The enzyme catalyses nicotinate beta-D-ribonucleotide + ATP + H(+) = deamido-NAD(+) + diphosphate. Its pathway is cofactor biosynthesis; NAD(+) biosynthesis; deamido-NAD(+) from nicotinate D-ribonucleotide: step 1/1. Catalyzes the reversible adenylation of nicotinate mononucleotide (NaMN) to nicotinic acid adenine dinucleotide (NaAD). This is Probable nicotinate-nucleotide adenylyltransferase from Cereibacter sphaeroides (strain ATCC 17025 / ATH 2.4.3) (Rhodobacter sphaeroides).